Consider the following 264-residue polypeptide: Undecaprenyl-diphosphatase (264 aa).

6 helical membrane passes run 41-61, 82-102, 106-126, 140-160, 213-233, and 244-264; these read NLAF…VILW, YVIN…FFKD, AIFG…AALL, ISMK…LPGL, IPAL…CLAC, and KLIY…ITQL.

This sequence belongs to the UppP family.

Its subcellular location is the cell inner membrane. The catalysed reaction is di-trans,octa-cis-undecaprenyl diphosphate + H2O = di-trans,octa-cis-undecaprenyl phosphate + phosphate + H(+). In terms of biological role, catalyzes the dephosphorylation of undecaprenyl diphosphate (UPP). Confers resistance to bacitracin. The chain is Undecaprenyl-diphosphatase from Bacteroides thetaiotaomicron (strain ATCC 29148 / DSM 2079 / JCM 5827 / CCUG 10774 / NCTC 10582 / VPI-5482 / E50).